Consider the following 955-residue polypeptide: Kinesin-like protein KIN-14L (955 aa).

Residues 19-140 (AARRFQAVQW…CILGLKAYHE (122 aa)) form the Calponin-homology (CH) domain. The Kinesin motor domain maps to 363–685 (NIRVYCRVRP…LKFAQRVSTV (323 aa)). An ATP-binding site is contributed by 445 to 452 (GQTGSGKT). Positions 692-719 (AHKETREVMHLKEQIENLKRALGTEEWN) form a coiled coil. Residues 878 to 942 (RKENIPADPR…GKPIENGKKD (65 aa)) are disordered. Positions 894-916 (NNFSHIKSPDTSNAKTMRRQSLT) are enriched in polar residues.

This sequence belongs to the TRAFAC class myosin-kinesin ATPase superfamily. Kinesin family. KIN-14 subfamily.

This Arabidopsis thaliana (Mouse-ear cress) protein is Kinesin-like protein KIN-14L.